A 500-amino-acid chain; its full sequence is Cytochrome P450 81F1 (500 aa).

The helical transmembrane segment at 1–21 threads the bilayer; sequence MLYFILLPLLFLVISYKFLYS. Lysine 248 is covalently cross-linked (Glycyl lysine isopeptide (Lys-Gly) (interchain with G-Cter in ubiquitin)). Cysteine 438 lines the heme pocket.

Belongs to the cytochrome P450 family. Heme is required as a cofactor.

Its subcellular location is the membrane. It participates in secondary metabolite biosynthesis. Functionally, involved in indole glucosinolate biosynthesis. Catalyzes hydroxylation reactions of the glucosinolate indole ring. Converts indol-3-yl-methylglucosinolate (I3M) to 4-hydroxy-indol-3-yl-methylglucosinolate (4OH-I3M) and/or 1-hydroxy-indol-3-yl-methylglucosinolate (1OH-I3M) intermediates. These hydroxy intermediates are converted to 4-methoxy-indol-3-yl-methylglucosinolate (4MO-I3M) and 1-methoxy-indol-3-yl-methylglucosinolate (1MO-I3M) by indole glucosinolate methyltransferase 1 and 2 (IGMT1 and IGMT2). This is Cytochrome P450 81F1 from Arabidopsis thaliana (Mouse-ear cress).